Here is a 678-residue protein sequence, read N- to C-terminus: Methionine--tRNA ligase (678 aa).

A 'HIGH' region motif is present at residues 18–28 (PYANGPIHLGH). Zn(2+) is bound by residues Cys149, Cys152, Cys162, and Cys165. A 'KMSKS' region motif is present at residues 334-338 (KMSKS). An ATP-binding site is contributed by Lys337. The tRNA-binding domain maps to 577–678 (DFAKVDLRVA…SGATPGMRVM (102 aa)).

The protein belongs to the class-I aminoacyl-tRNA synthetase family. MetG type 1 subfamily. As to quaternary structure, homodimer. The cofactor is Zn(2+).

It localises to the cytoplasm. It catalyses the reaction tRNA(Met) + L-methionine + ATP = L-methionyl-tRNA(Met) + AMP + diphosphate. Its function is as follows. Is required not only for elongation of protein synthesis but also for the initiation of all mRNA translation through initiator tRNA(fMet) aminoacylation. This chain is Methionine--tRNA ligase, found in Marinobacter nauticus (strain ATCC 700491 / DSM 11845 / VT8) (Marinobacter aquaeolei).